The primary structure comprises 198 residues: GTP-binding protein Di-Ras1 (198 aa).

Residues 17–22, 33–39, 61–65, 121–125, Ala-151, and 151–152 contribute to the GTP site; these read GVGKSS, RDTYIPT, DTTGS, NKCDE, and AK. The Effector region motif lies at 36–44; it reads YIPTIEDTY. The segment covering 178 to 192 has biased composition (basic and acidic residues); sequence DGKRSGKQKRTDRVK. A disordered region spans residues 178 to 198; the sequence is DGKRSGKQKRTDRVKGKCTLM. Cys-195 carries the cysteine methyl ester modification. Residue Cys-195 is the site of S-geranylgeranyl cysteine attachment. Positions 196–198 are cleaved as a propeptide — removed in mature form; it reads TLM.

The protein belongs to the small GTPase superfamily. Di-Ras family. Highly expressed in heart and brain.

The protein resides in the cell membrane. In terms of biological role, displays low GTPase activity and exists predominantly in the GTP-bound form. The protein is GTP-binding protein Di-Ras1 (DIRAS1) of Homo sapiens (Human).